The chain runs to 1146 residues: Probable phospholipid-transporting ATPase IIB (1146 aa).

Residues 1 to 143 (MADQIPLYPV…IKNQKYNVFT (143 aa)) lie on the Cytoplasmic side of the membrane. A helical membrane pass occupies residues 144–164 (FIPGVLYEQFKFFLNLYFLVV). Residues 165–172 (SCSQFVPA) lie on the Extracellular side of the membrane. Residues 173-193 (LKIGYLYTYWAPLGFVLAVTI) form a helical membrane-spanning segment. Topologically, residues 194-381 (AREAIDEFRR…LDLELNQLTK (188 aa)) are cytoplasmic. The chain crosses the membrane as a helical span at residues 382-402 (ALFLALVVLSVVMVTLQGFAG). The Extracellular portion of the chain corresponds to 403 to 407 (PWYRN). Residues 408 to 427 (LFRFLLLFSYIIPISLRVNL) traverse the membrane as a helical segment. At 428 to 938 (DMGKAAYGWM…ALGQFVMHRG (511 aa)) the chain is on the cytoplasmic side. Catalysis depends on aspartate 467, which acts as the 4-aspartylphosphate intermediate. Aspartate 467, lysine 468, and threonine 469 together coordinate ATP. Aspartate 467 is a Mg(2+) binding site. Threonine 469 is a Mg(2+) binding site. The span at 508-519 (VHSQPSGHNPSS) shows a compositional bias: polar residues. The disordered stretch occupies residues 508–535 (VHSQPSGHNPSSAPLRRSQSSTPKVKKS). ATP contacts are provided by glutamate 590, phenylalanine 632, lysine 637, lysine 656, arginine 685, threonine 686, threonine 765, glycine 766, aspartate 767, arginine 847, and lysine 853. Aspartate 873 serves as a coordination point for Mg(2+). Residues asparagine 876 and aspartate 877 each contribute to the ATP site. Position 877 (aspartate 877) interacts with Mg(2+). The chain crosses the membrane as a helical span at residues 939-959 (LIISTMQAVFSSVFYFASVPL). The Extracellular segment spans residues 960–961 (YQ). Residues 962-982 (GFLMVGYATIYTMFPVFSLVL) traverse the membrane as a helical segment. Residues 983–1011 (DQDVKPEMAILYPELYKDLTKGRSLSFKT) lie on the Cytoplasmic side of the membrane. Residues 1012–1032 (FLIWVLISIYQGGILMYGALL) form a helical membrane-spanning segment. Residues 1033–1040 (LFEDEFVH) are Extracellular-facing. The chain crosses the membrane as a helical span at residues 1041 to 1061 (VVAISFTALILTELLMVALTI). The Cytoplasmic portion of the chain corresponds to 1062 to 1065 (RTWH). A helical transmembrane segment spans residues 1066-1086 (WLMVVAEFLSLGCYVASLAFL). Residues 1087 to 1105 (NEYFGIGRVSFGAFLDVAF) are Extracellular-facing. The helical transmembrane segment at 1106–1128 (ITTVTFLWKVSAITVVSCLPLYV) threads the bilayer. The Cytoplasmic segment spans residues 1129 to 1146 (LKYLKRKLSPPSYSKLSS).

Belongs to the cation transport ATPase (P-type) (TC 3.A.3) family. Type IV subfamily. Mg(2+) serves as cofactor. Found in most tissues except spleen and muscle. Most abundant in testis. Also detected in fetal tissues.

It localises to the golgi apparatus. It is found in the trans-Golgi network membrane. It carries out the reaction ATP + H2O + phospholipidSide 1 = ADP + phosphate + phospholipidSide 2.. The polypeptide is Probable phospholipid-transporting ATPase IIB (Atp9b) (Mus musculus (Mouse)).